The sequence spans 178 residues: Probable major fimbrial subunit LpfA (178 aa).

The first 24 residues, 1-24 (MEFFMKKVVFALTALALTSGTVFA), serve as a signal peptide directing secretion.

The protein belongs to the fimbrial protein family.

It is found in the fimbrium. Functionally, part of the lpfABCC'DE fimbrial operon. LP fimbriae may participate in the interaction with eukaryotic cells by assisting in microcolony formation. This chain is Probable major fimbrial subunit LpfA (lpfA), found in Escherichia coli O157:H7.